The chain runs to 827 residues: Cell surface glycoprotein (827 aa).

An N-terminal signal peptide occupies residues 1-34 (MTKLKDQTRAILLATLMVTSVFAGAIAFTGSAAA). An N-linked (Glc...) asparagine glycan is attached at N47. Residues 73 to 102 (PLLTGTAGNSEGVSLDLSSPIPQTTENQPL) are compositionally biased toward polar residues. A disordered region spans residues 73–111 (PLLTGTAGNSEGVSLDLSSPIPQTTENQPLGTYDVDGSG). N-linked (Glc...) asparagine glycans are attached at residues N117, N308, N313, N532, and N766. The tract at residues 755-804 (SEREDTTTSSDNATDTTTTTDGPTETTTTAEPTETTEEPTEETTTSSNTP) is disordered. A compositionally biased stretch (low complexity) spans 761–787 (TTSSDNATDTTTTTDGPTETTTTAEPT). Residues 804–806 (PGF) carry the PGF sorting signal motif. A helical membrane pass occupies residues 804 to 823 (PGFGIAVALVALVGAALLAL).

Belongs to the halobacterial S-layer protein family. O-glycosylated on 4 to 6 threonine residues; glycans consist of Glc-Gal disaccharides. In terms of processing, the N-terminus is not blocked. Post-translationally, cleaved by the archaeosortase ArtA at the C-terminus, with removal of a short hydrophobic segment. Lipidation: Following protein translocation across the membrane, the protein is modified by a derivative of mevalonic acid. Lipid modification is ArtA-dependent and requires the conserved C-terminal PGF motif. In terms of processing, asn-47 and Asn-117 are glycosylated by a pentasaccharide comprising a hexose, 2 hexuronic acids, a methyl ester of a hexuronic acid and mannose. The pentasaccharide is produced in 2 steps: first, a tetrasaccharide is built on dolichol-P and then transferred to the S-layer glycoprotein. Then, the mannose fifth sugar is attached to a distinct molecule of dolichol-P and is transferred to the protein already carrying the tetrasaccharide. The pentasaccharide on Asn-47 was initially thought to contain mannose, galactose, glucose and idose with a relative ratio of 1/3/3/0.2. However, it was later shown that it is not the case. Under low-salt conditions (1.75 M instead of 3.4 M), a tetrasaccharide consisting of a sulfated hexose, 2 hexoses and rhamnose is attached to Asn-532.

It localises to the secreted. Its subcellular location is the cell wall. It is found in the S-layer. The protein localises to the cell membrane. S-layer protein. The S-layer is a paracrystalline mono-layered assembly of proteins which coat the surface of the cell. The chain is Cell surface glycoprotein (csg) from Haloferax volcanii (strain ATCC 29605 / DSM 3757 / JCM 8879 / NBRC 14742 / NCIMB 2012 / VKM B-1768 / DS2) (Halobacterium volcanii).